Reading from the N-terminus, the 37-residue chain is uncharacterized protein (37 aa).

Residues 13 to 33 (TFLTIIVLLMIVFGIAIVALL) traverse the membrane as a helical segment.

It is found in the host membrane. This is an uncharacterized protein from Acidianus convivator (ABV).